The sequence spans 214 residues: Rho-related GTP-binding protein RhoJ (214 aa).

S-palmitoyl cysteine attachment occurs at residues cysteine 3 and cysteine 11. GTP contacts are provided by residues alanine 31–cysteine 36, phenylalanine 46–threonine 53, aspartate 75–glutamine 79, threonine 133–aspartate 136, and alanine 177–leucine 178. Residues tyrosine 50–tyrosine 58 carry the Effector region motif. At cysteine 211 the chain carries Cysteine methyl ester. Cysteine 211 carries the S-farnesyl cysteine lipid modification. A propeptide spans alanine 212–isoleucine 214 (removed in mature form).

This sequence belongs to the small GTPase superfamily. Rho family. Interacts with the CRIB domains of proteins such as Pak1 and Was/Wasp. Interacts with GLUL. In terms of processing, palmitoylated; regulates localization to the plasma membrane and may be mediated by GLUL. In terms of tissue distribution, highly expressed in heart with moderate levels in lung and liver. Very low levels detected in brain, spleen, skeletal muscle, kidney and testis.

The protein resides in the cell membrane. Its function is as follows. Plasma membrane-associated small GTPase specifically involved in angiogenesis. Required for endothelial cell migration during vascular development via its interaction with GLUL. Elicits the formation of F-actin-rich structures, thereby regulating endothelial cell migration. The protein is Rho-related GTP-binding protein RhoJ (Rhoj) of Mus musculus (Mouse).